The following is a 1003-amino-acid chain: Translation initiation factor IF-2 (1003 aa).

Positions Ser36–Met392 are disordered. Residues Ala62–Ala151 show a composition bias toward low complexity. 2 stretches are compositionally biased toward pro residues: residues Asp178–Lys190 and Pro213–Gly230. Composition is skewed to gly residues over residues Pro231 to Arg243 and Gly255 to Pro271. A compositionally biased stretch (low complexity) spans Gly273–Gly286. A compositionally biased stretch (gly residues) spans Gly329–Gly372. Residues Arg376–Lys385 show a composition bias toward basic residues. The tr-type G domain occupies Lys498–Asp670. Residues Gly507–Thr514 form a G1 region. Position 507-514 (Gly507–Thr514) interacts with GTP. Residues Gly532–Gly536 are G2. The G3 stretch occupies residues Asp557 to Gly560. Residues Asp557 to His561 and Asn611 to Asp614 contribute to the GTP site. The G4 stretch occupies residues Asn611–Asp614. A G5 region spans residues Ser647–Lys649.

Belongs to the TRAFAC class translation factor GTPase superfamily. Classic translation factor GTPase family. IF-2 subfamily.

The protein localises to the cytoplasm. In terms of biological role, one of the essential components for the initiation of protein synthesis. Protects formylmethionyl-tRNA from spontaneous hydrolysis and promotes its binding to the 30S ribosomal subunits. Also involved in the hydrolysis of GTP during the formation of the 70S ribosomal complex. This chain is Translation initiation factor IF-2, found in Corynebacterium glutamicum (strain R).